Consider the following 166-residue polypeptide: uncharacterized protein (166 aa).

Composition is skewed to basic and acidic residues over residues 1–13, 21–112, and 119–137; these read MAEVSKKRCEHNS, KAND…KTKE, and DNVENKDKNEVYENIKEGG. The segment at 1–144 is disordered; the sequence is MAEVSKKRCE…EGGSKAWNKT (144 aa). Repeat copies occupy residues 31-41, 42-52, 53-63, 64-74, 75-85, 86-96, 97-107, and 108-118. The 8 X 11 AA approximate tandem repeats of D-K-T-K-E-T-A-G/E-S-A-K stretch occupies residues 31-118; that stretch reads DKTKETAGSA…KTKETAGNVR (88 aa).

This sequence belongs to the LEA type 1 family.

This is an uncharacterized protein from Encephalitozoon cuniculi (strain GB-M1) (Microsporidian parasite).